Reading from the N-terminus, the 55-residue chain is Large ribosomal subunit protein bL33 (55 aa).

Belongs to the bacterial ribosomal protein bL33 family.

This Caulobacter sp. (strain K31) protein is Large ribosomal subunit protein bL33.